The sequence spans 599 residues: Elongation factor 4 (599 aa).

Residues 2–184 form the tr-type G domain; the sequence is KNIRNFSIIA…RLVRDIPPPQ (183 aa). GTP is bound by residues 14-19 and 131-134; these read DHGKST and NKID.

It belongs to the TRAFAC class translation factor GTPase superfamily. Classic translation factor GTPase family. LepA subfamily.

The protein localises to the cell inner membrane. It catalyses the reaction GTP + H2O = GDP + phosphate + H(+). Its function is as follows. Required for accurate and efficient protein synthesis under certain stress conditions. May act as a fidelity factor of the translation reaction, by catalyzing a one-codon backward translocation of tRNAs on improperly translocated ribosomes. Back-translocation proceeds from a post-translocation (POST) complex to a pre-translocation (PRE) complex, thus giving elongation factor G a second chance to translocate the tRNAs correctly. Binds to ribosomes in a GTP-dependent manner. This chain is Elongation factor 4, found in Salmonella gallinarum (strain 287/91 / NCTC 13346).